Reading from the N-terminus, the 551-residue chain is MFS-type transporter ATEG_00331 (551 aa).

The signal sequence occupies residues 1–18; the sequence is MKAWLLVSSLCLSTFIAA. The next 4 membrane-spanning stretches (helical) occupy residues 40-60, 71-91, 102-122, and 132-152; these read LEFTWIGTAYLLPAAASTPPW, PVLMISIVVFFIGSLIGALAI, IQGTGGGGILGLSATVIGDVF, and GVLGVTWGVACGLGPIVGGAF. N-linked (GlcNAc...) asparagine glycans are attached at residues Asn-165 and Asn-178. Transmembrane regions (helical) follow at residues 179–199, 206–228, 233–255, 324–344, 354–374, 380–400, 417–437, and 493–513; these read LTTSVPVAGVAGALVLLFLEV, IIEGLLAMDWLGTITIVGATVMF, GYGGIAYPWNSATVVCLIVFGIG, VYLLPVAVTLCVASTATGLYI, IYFGLVMMILGHGLYINLQPY, IIIFQIIAGLGLGPLFQAPII, TVFFARDIATAMSIVFGGVIF, and SEWIFYTALSGAALLLSVFIS. N-linked (GlcNAc...) asparagine glycosylation is present at Asn-524.

This sequence belongs to the major facilitator superfamily. TCR/Tet family.

The protein localises to the membrane. In terms of biological role, MFS-type transporter; part of the gene cluster that mediates the biosynthesis of isoflavipucine. The chain is MFS-type transporter ATEG_00331 from Aspergillus terreus (strain NIH 2624 / FGSC A1156).